Reading from the N-terminus, the 93-residue chain is Integration host factor subunit beta (93 aa).

The protein belongs to the bacterial histone-like protein family. Heterodimer of an alpha and a beta chain.

This protein is one of the two subunits of integration host factor, a specific DNA-binding protein that functions in genetic recombination as well as in transcriptional and translational control. The protein is Integration host factor subunit beta of Idiomarina loihiensis (strain ATCC BAA-735 / DSM 15497 / L2-TR).